A 462-amino-acid chain; its full sequence is Dipeptidyl peptidase 1 (462 aa).

The N-terminal stretch at 1-24 is a signal peptide; it reads MGPWTHSLRAALLLVLLGVCTVSS. N-linked (GlcNAc...) asparagine glycosylation is found at Asn-29 and Asn-53. 2 disulfide bridges follow: Cys-30-Cys-118 and Cys-54-Cys-136. Positions 135–229 are excised as a propeptide; it reads ACFVGKKMAN…TDEIQQQILS (95 aa). Residue Asn-144 is glycosylated (N-linked (GlcNAc...) asparagine). Disulfide bonds link Cys-254–Cys-297, Cys-290–Cys-330, and Cys-320–Cys-336. Residue Cys-257 is part of the active site. N-linked (GlcNAc...) asparagine glycosylation is present at Asn-275. 2 residues coordinate chloride: Phe-301 and Tyr-303. Tyr-346 contributes to the chloride binding site. Residues His-404 and Asn-426 contribute to the active site.

This sequence belongs to the peptidase C1 family. Tetramer of heterotrimers consisting of exclusion domain, heavy- and light chains. Chloride serves as cofactor. As to expression, broadly distributed, but higher levels found in liver, spleen, intestine, lung and kidney.

The protein localises to the lysosome. It carries out the reaction Release of an N-terminal dipeptide, Xaa-Yaa-|-Zaa-, except when Xaa is Arg or Lys, or Yaa or Zaa is Pro.. Its function is as follows. Thiol protease. Has dipeptidylpeptidase activity. Active against a broad range of dipeptide substrates composed of both polar and hydrophobic amino acids. Proline cannot occupy the P1 position and arginine cannot occupy the P2 position of the substrate. Can act as both an exopeptidase and endopeptidase. Activates serine proteases such as elastase, cathepsin G and granzymes A and B. The sequence is that of Dipeptidyl peptidase 1 (Ctsc) from Rattus norvegicus (Rat).